A 684-amino-acid polypeptide reads, in one-letter code: DNA-directed RNA polymerase subunit beta' (684 aa).

Positions 69, 71, 87, and 90 each coordinate Zn(2+). Residues Asp489, Asp491, and Asp493 each coordinate Mg(2+).

This sequence belongs to the RNA polymerase beta' chain family. RpoC1 subfamily. As to quaternary structure, in plastids the minimal PEP RNA polymerase catalytic core is composed of four subunits: alpha, beta, beta', and beta''. When a (nuclear-encoded) sigma factor is associated with the core the holoenzyme is formed, which can initiate transcription. The cofactor is Mg(2+). Requires Zn(2+) as cofactor.

It is found in the plastid. It localises to the chloroplast. It catalyses the reaction RNA(n) + a ribonucleoside 5'-triphosphate = RNA(n+1) + diphosphate. In terms of biological role, DNA-dependent RNA polymerase catalyzes the transcription of DNA into RNA using the four ribonucleoside triphosphates as substrates. The chain is DNA-directed RNA polymerase subunit beta' from Marchantia polymorpha (Common liverwort).